Here is a 498-residue protein sequence, read N- to C-terminus: Hyaluronan-mediated motility receptor (498 aa).

The segment at Glu-150–Gln-331 is required for interaction with FAM83D. 2 N-linked (GlcNAc...) asparagine glycosylation sites follow: Asn-262 and Asn-302. Hyaluronic acid-binding regions lie at residues Lys-420–Lys-430 and Lys-442–Lys-451. N-linked (GlcNAc...) asparagine glycosylation occurs at Asn-483. Thr-488 bears the Phosphothreonine mark.

As to quaternary structure, interacts with ANKRD26. Interacts with DYNLL1. Interacts with FAM83D/CHICA.

Its subcellular location is the cell surface. It localises to the cytoplasm. The protein resides in the cytoskeleton. The protein localises to the spindle. Receptor for hyaluronic acid (HA). Involved in cell motility. When hyaluronan binds to HMMR, the phosphorylation of a number of proteins, including the PTK2/FAK1 occurs. May also be involved in cellular transformation and metastasis formation, and in regulating extracellular-regulated kinase (ERK) activity. May act as a regulator of adipogenisis. This chain is Hyaluronan-mediated motility receptor (Hmmr), found in Rattus norvegicus (Rat).